The primary structure comprises 384 residues: UPF0496 protein At3g28310/At3g28320 (384 aa).

The stretch at 184–215 forms a coiled coil; the sequence is QESLFDRVTETKERIAKEIEEVQKRISNVNTA. Transmembrane regions (helical) follow at residues 217–237 and 242–262; these read IVSHVVFGAAAFGYAAGCIAL and VGAPLGAGMVTLLPVIVVQWV. Positions 264–361 form a coiled coil; that stretch reads VNYVLNNSLE…TTKITEVCET (98 aa).

Belongs to the UPF0496 family.

It is found in the membrane. In Arabidopsis thaliana (Mouse-ear cress), this protein is UPF0496 protein At3g28310/At3g28320.